A 127-amino-acid polypeptide reads, in one-letter code: Longitudinals lacking protein-like (127 aa).

One can recognise a BTB domain in the interval T33–Q98.

The BTB domain interacts with the BTB domain of Trl in vitro. Found in a Pc-containing complex.

The protein localises to the nucleus. In terms of biological role, required, together with Trl, for maintaining the repressed state of target genes including homeotic genes Scr and Ubx. May also be involved in the activation of homeotic genes. Binds to a DNA Polycomb response element (PRE) at the bithorax complex. Also binds to polytene chromosomes at several hundred sites, many of which are shared with Trl and ph-p. Required during embryonic development. This is Longitudinals lacking protein-like from Drosophila melanogaster (Fruit fly).